The following is a 159-amino-acid chain: 2-C-methyl-D-erythritol 2,4-cyclodiphosphate synthase (159 aa).

Residues D10 and H12 each coordinate a divalent metal cation. 4-CDP-2-C-methyl-D-erythritol 2-phosphate is bound by residues 10 to 12 and 36 to 37; these read DVH and HS. H44 is a binding site for a divalent metal cation. 4-CDP-2-C-methyl-D-erythritol 2-phosphate-binding positions include 58 to 60, 134 to 137, F141, and R144; these read DIG and TTSE.

It belongs to the IspF family. Homotrimer. The cofactor is a divalent metal cation.

It catalyses the reaction 4-CDP-2-C-methyl-D-erythritol 2-phosphate = 2-C-methyl-D-erythritol 2,4-cyclic diphosphate + CMP. Its pathway is isoprenoid biosynthesis; isopentenyl diphosphate biosynthesis via DXP pathway; isopentenyl diphosphate from 1-deoxy-D-xylulose 5-phosphate: step 4/6. Functionally, involved in the biosynthesis of isopentenyl diphosphate (IPP) and dimethylallyl diphosphate (DMAPP), two major building blocks of isoprenoid compounds. Catalyzes the conversion of 4-diphosphocytidyl-2-C-methyl-D-erythritol 2-phosphate (CDP-ME2P) to 2-C-methyl-D-erythritol 2,4-cyclodiphosphate (ME-CPP) with a corresponding release of cytidine 5-monophosphate (CMP). This Cereibacter sphaeroides (strain ATCC 17025 / ATH 2.4.3) (Rhodobacter sphaeroides) protein is 2-C-methyl-D-erythritol 2,4-cyclodiphosphate synthase.